Here is a 176-residue protein sequence, read N- to C-terminus: ATP-dependent protease subunit HslV (176 aa).

Residue Thr-2 is part of the active site. The Na(+) site is built by Gly-157, Cys-160, and Thr-163.

This sequence belongs to the peptidase T1B family. HslV subfamily. In terms of assembly, a double ring-shaped homohexamer of HslV is capped on each side by a ring-shaped HslU homohexamer. The assembly of the HslU/HslV complex is dependent on binding of ATP.

Its subcellular location is the cytoplasm. It carries out the reaction ATP-dependent cleavage of peptide bonds with broad specificity.. Its activity is regulated as follows. Allosterically activated by HslU binding. Its function is as follows. Protease subunit of a proteasome-like degradation complex believed to be a general protein degrading machinery. In Escherichia coli O45:K1 (strain S88 / ExPEC), this protein is ATP-dependent protease subunit HslV.